The following is a 227-amino-acid chain: Chalcone--flavanone isomerase (227 aa).

3 residues coordinate substrate: Thr50, Asn115, and Ser192.

The protein belongs to the chalcone isomerase family. In terms of tissue distribution, fibers.

It carries out the reaction a chalcone = a flavanone.. It functions in the pathway secondary metabolite biosynthesis; flavonoid biosynthesis. Catalyzes the intramolecular cyclization of bicyclic chalcones into tricyclic (S)-flavanones. Responsible for the isomerization of 4,2',4',6'-tetrahydroxychalcone (also termed chalcone) into naringenin. This chain is Chalcone--flavanone isomerase (CHI), found in Gossypium hirsutum (Upland cotton).